Consider the following 307-residue polypeptide: Pseudouridine-5'-phosphate glycosidase (307 aa).

The Proton donor role is filled by E26. Residues K88 and V108 each coordinate substrate. Residue D140 coordinates Mn(2+). 142–144 (SAD) lines the substrate pocket. K161 functions as the Nucleophile in the catalytic mechanism.

It belongs to the pseudouridine-5'-phosphate glycosidase family. In terms of assembly, homotrimer. Mn(2+) is required as a cofactor.

The enzyme catalyses D-ribose 5-phosphate + uracil = psi-UMP + H2O. In terms of biological role, catalyzes the reversible cleavage of pseudouridine 5'-phosphate (PsiMP) to ribose 5-phosphate and uracil. Functions biologically in the cleavage direction, as part of a pseudouridine degradation pathway. This Clostridium botulinum (strain Langeland / NCTC 10281 / Type F) protein is Pseudouridine-5'-phosphate glycosidase.